Reading from the N-terminus, the 552-residue chain is Chaperonin GroEL (552 aa).

ATP contacts are provided by residues 29-32 (TAGP), Lys50, 86-90 (DGTTT), Gly417, and Asp499.

This sequence belongs to the chaperonin (HSP60) family. Forms a cylinder of 14 subunits composed of two heptameric rings stacked back-to-back. Interacts with the co-chaperonin GroES.

The protein localises to the cytoplasm. The enzyme catalyses ATP + H2O + a folded polypeptide = ADP + phosphate + an unfolded polypeptide.. Functionally, together with its co-chaperonin GroES, plays an essential role in assisting protein folding. The GroEL-GroES system forms a nano-cage that allows encapsulation of the non-native substrate proteins and provides a physical environment optimized to promote and accelerate protein folding. In Ehrlichia canis (strain Jake), this protein is Chaperonin GroEL.